Consider the following 375-residue polypeptide: Delta(12) fatty acid dehydrogenase (375 aa).

Helical transmembrane passes span I54–L74 and L77–G97. The Histidine box-1 signature appears at H98 to H102. The chain crosses the membrane as a helical span at residues W110–W130. The Histidine box-2 signature appears at H134 to H138. The next 3 membrane-spanning stretches (helical) occupy residues L172–S192, V218–A238, and A242–I262. The Histidine box-3 signature appears at H308–H312.

The protein belongs to the fatty acid desaturase type 1 family. The cofactor is Fe cation. Seed.

The protein resides in the membrane. The catalysed reaction is a (9Z,12Z)-octadecadienoyl-containing glycerolipid + 2 Fe(II)-[cytochrome b5] + O2 + 2 H(+) = a (9Z)-octadec-9-en-12-ynoyl-containing glycerolipid + 2 Fe(III)-[cytochrome b5] + 2 H2O. Its pathway is lipid metabolism; polyunsaturated fatty acid biosynthesis. Functionally, changes the delta-12 double bond of linoleic acid into a triple bond in the biosynthesis of crepenynic acid. The chain is Delta(12) fatty acid dehydrogenase from Crepis alpina (Hawksbeard).